We begin with the raw amino-acid sequence, 364 residues long: MLKRTPLFAVYERYGAKTIDFGGWELPVQFSSIKEEHEAVRTRAGLFDVSHMGEFVVKGDDSLAFLQKMMTNDVSKLTDGRVQYSLMCYEDGGTVDDLLIYKKADGHYLLVVNAANIEKDFEWLHGHLFGDVELVNISQEIAQLALQGPLAEQVLQKLTNTDLSAIKFFSFQDDININGVKALVSRTGYTGEDGFEIYCRREDAVALWESILEAGKEEGVLPCGLGARDTLRFEATLPLYGQELSKDITPIEAGLGFAVKTNKDADFIGKDVLKKQKEEGTARKLVGIEMIDKGIPRHGYKVFANGEEIGFVTTGTQSPTLKKNIGLALIKTEFTEMDTEVEVEIRGKRLKAKVIATPFYKRAK.

The protein belongs to the GcvT family. The glycine cleavage system is composed of four proteins: P, T, L and H.

It catalyses the reaction N(6)-[(R)-S(8)-aminomethyldihydrolipoyl]-L-lysyl-[protein] + (6S)-5,6,7,8-tetrahydrofolate = N(6)-[(R)-dihydrolipoyl]-L-lysyl-[protein] + (6R)-5,10-methylene-5,6,7,8-tetrahydrofolate + NH4(+). Functionally, the glycine cleavage system catalyzes the degradation of glycine. This Geobacillus sp. (strain WCH70) protein is Aminomethyltransferase.